The chain runs to 508 residues: Serine/threonine-protein kinase VRK2 (508 aa).

Positions tryptophan 29–proline 319 constitute a Protein kinase domain. Residues isoleucine 35–isoleucine 43 and lysine 61 contribute to the ATP site. Aspartate 166 acts as the Proton acceptor in catalysis. At threonine 336 the chain carries Phosphothreonine. The interval threonine 397 to leucine 508 is interaction with MAP3K7. Position 406 is a phosphoserine (serine 406). Residues valine 487–phenylalanine 507 traverse the membrane as a helical; Anchor for type IV membrane protein segment.

This sequence belongs to the protein kinase superfamily. CK1 Ser/Thr protein kinase family. VRK subfamily. As to quaternary structure, isoform 1 interacts with MAP3K7, MAP2K7, MAP2K1 and KSR1. Isoform 1 and isoform 2 interact with RAN and MAPK8IP1. In terms of assembly, (Microbial infection) Isoform 1 interacts with Epstein-Barr virus BHRF1; this interaction is involved in protecting cells from apoptosis. (Microbial infection) Isoform 1 interacts with vaccinia protein B12. Autophosphorylated. In terms of tissue distribution, isoform 1 and isoform 2 are expressed in various tumor cell lines. Expression of isoform 1 inversely correlates with ERBB2 in breast carcinomas (at protein level). Widely expressed. Highly expressed in fetal liver, skeletal muscle, pancreas, heart, peripheral blood leukocytes and testis.

The protein localises to the cytoplasm. It is found in the endoplasmic reticulum membrane. The protein resides in the mitochondrion membrane. Its subcellular location is the nucleus envelope. It localises to the nucleus. The catalysed reaction is L-seryl-[protein] + ATP = O-phospho-L-seryl-[protein] + ADP + H(+). It catalyses the reaction L-threonyl-[protein] + ATP = O-phospho-L-threonyl-[protein] + ADP + H(+). Its activity is regulated as follows. RAN inhibits its autophosphorylation and its ability to phosphorylate histone H3. In terms of biological role, serine/threonine kinase that regulates several signal transduction pathways. Isoform 1 modulates the stress response to hypoxia and cytokines, such as interleukin-1 beta (IL1B) and this is dependent on its interaction with MAPK8IP1, which assembles mitogen-activated protein kinase (MAPK) complexes. Inhibition of signal transmission mediated by the assembly of MAPK8IP1-MAPK complexes reduces JNK phosphorylation and JUN-dependent transcription. Phosphorylates 'Thr-18' of p53/TP53, histone H3, and may also phosphorylate MAPK8IP1. Phosphorylates BANF1 and disrupts its ability to bind DNA and reduces its binding to LEM domain-containing proteins. Down-regulates the transactivation of transcription induced by ERBB2, HRAS, BRAF, and MEK1. Blocks the phosphorylation of ERK in response to ERBB2 and HRAS. Can also phosphorylate the following substrates that are commonly used to establish in vitro kinase activity: casein, MBP and histone H2B, but it is not sure that this is physiologically relevant. Its function is as follows. Phosphorylates 'Thr-18' of p53/TP53, as well as histone H3. Reduces p53/TP53 ubiquitination by MDM2, promotes p53/TP53 acetylation by EP300 and thereby increases p53/TP53 stability and activity. This is Serine/threonine-protein kinase VRK2 (VRK2) from Homo sapiens (Human).